Here is a 471-residue protein sequence, read N- to C-terminus: Secretogranin-3 (471 aa).

The N-terminal stretch at 1–22 is a signal peptide; sequence MGFLWTGSWILVLVLNSGPIQA. Disordered stretches follow at residues 24-73, 92-145, 208-231, and 345-405; these read PKPE…SNFS, KAKQ…HQLD, ANNYEEAPEKPTSRTENQDGKIPE, and KLEK…DEAK. The segment covering 28–45 has biased composition (basic and acidic residues); sequence GSQDKSLHNRELSAERPL. Ser40 is modified (phosphoserine). O-linked (Xyl...) (chondroitin sulfate) serine glycosylation occurs at Ser40. Low complexity predominate over residues 62 to 73; it reads PSESKPSESNFS. Composition is skewed to basic and acidic residues over residues 106-142, 214-231, 345-355, and 363-405; these read LNVDDADSTKNRKLTDEYDSTKSGLDRKVQDDPDGLH, APEKPTSRTENQDGKIPE, KLEKNTTDSKS, and EKSH…DEAK. Residue Ser365 is modified to Phosphoserine.

Interacts with CHGA. Interacts with secretogranin II/SCG2. Interacts (via C-terminus) with CPE. Expression restricted to the brain and pituitary gland. Not detected in the adrenal gland.

It localises to the cytoplasmic vesicle. The protein localises to the secretory vesicle. Its subcellular location is the secretory vesicle membrane. It is found in the secreted. Its function is as follows. Member of the granin protein family that regulates the biogenesis of secretory granules. Acts as a sorting receptor for intragranular proteins including chromogranin A/CHGA. May also play a role in angiogenesis. Promotes endothelial proliferation, migration and tube formation through MEK/ERK signaling pathway. The chain is Secretogranin-3 (Scg3) from Rattus norvegicus (Rat).